The sequence spans 283 residues: Polyamine aminopropyltransferase (283 aa).

One can recognise a PABS domain in the interval 2-237 (ELWYTDQHTK…GHWLFGFASK (236 aa)). Gln-31 serves as a coordination point for S-methyl-5'-thioadenosine. Residues His-62 and Asp-86 each coordinate spermidine. S-methyl-5'-thioadenosine-binding positions include Glu-106 and 137–138 (EG). Asp-155 functions as the Proton acceptor in the catalytic mechanism. Residue 155–158 (DCAD) participates in spermidine binding. Residue Pro-162 participates in S-methyl-5'-thioadenosine binding.

The protein belongs to the spermidine/spermine synthase family. As to quaternary structure, homodimer or homotetramer.

Its subcellular location is the cytoplasm. The enzyme catalyses S-adenosyl 3-(methylsulfanyl)propylamine + putrescine = S-methyl-5'-thioadenosine + spermidine + H(+). The protein operates within amine and polyamine biosynthesis; spermidine biosynthesis; spermidine from putrescine: step 1/1. Its function is as follows. Catalyzes the irreversible transfer of a propylamine group from the amino donor S-adenosylmethioninamine (decarboxy-AdoMet) to putrescine (1,4-diaminobutane) to yield spermidine. The protein is Polyamine aminopropyltransferase of Lachnoclostridium phytofermentans (strain ATCC 700394 / DSM 18823 / ISDg) (Clostridium phytofermentans).